The primary structure comprises 230 residues: 5'-methylthioadenosine/S-adenosylhomocysteine nucleosidase (230 aa).

Residue Glu12 is the Proton acceptor of the active site. Residues Gly78, Ile153, and 174 to 175 (ME) each bind substrate. The active-site Proton donor is Asp198.

The protein belongs to the PNP/UDP phosphorylase family. MtnN subfamily.

It carries out the reaction S-adenosyl-L-homocysteine + H2O = S-(5-deoxy-D-ribos-5-yl)-L-homocysteine + adenine. It catalyses the reaction S-methyl-5'-thioadenosine + H2O = 5-(methylsulfanyl)-D-ribose + adenine. The enzyme catalyses 5'-deoxyadenosine + H2O = 5-deoxy-D-ribose + adenine. It functions in the pathway amino-acid biosynthesis; L-methionine biosynthesis via salvage pathway; S-methyl-5-thio-alpha-D-ribose 1-phosphate from S-methyl-5'-thioadenosine (hydrolase route): step 1/2. Its function is as follows. Catalyzes the irreversible cleavage of the glycosidic bond in both 5'-methylthioadenosine (MTA) and S-adenosylhomocysteine (SAH/AdoHcy) to adenine and the corresponding thioribose, 5'-methylthioribose and S-ribosylhomocysteine, respectively. Also cleaves 5'-deoxyadenosine, a toxic by-product of radical S-adenosylmethionine (SAM) enzymes, into 5-deoxyribose and adenine. In Shewanella halifaxensis (strain HAW-EB4), this protein is 5'-methylthioadenosine/S-adenosylhomocysteine nucleosidase.